The chain runs to 260 residues: Thiazole synthase (260 aa).

Catalysis depends on Lys96, which acts as the Schiff-base intermediate with DXP. 1-deoxy-D-xylulose 5-phosphate contacts are provided by residues Gly157, 184-185 (AG), and 206-207 (NT).

Belongs to the ThiG family. Homotetramer. Forms heterodimers with either ThiH or ThiS.

It is found in the cytoplasm. The enzyme catalyses [ThiS sulfur-carrier protein]-C-terminal-Gly-aminoethanethioate + 2-iminoacetate + 1-deoxy-D-xylulose 5-phosphate = [ThiS sulfur-carrier protein]-C-terminal Gly-Gly + 2-[(2R,5Z)-2-carboxy-4-methylthiazol-5(2H)-ylidene]ethyl phosphate + 2 H2O + H(+). The protein operates within cofactor biosynthesis; thiamine diphosphate biosynthesis. Catalyzes the rearrangement of 1-deoxy-D-xylulose 5-phosphate (DXP) to produce the thiazole phosphate moiety of thiamine. Sulfur is provided by the thiocarboxylate moiety of the carrier protein ThiS. In vitro, sulfur can be provided by H(2)S. The protein is Thiazole synthase of Nitrobacter hamburgensis (strain DSM 10229 / NCIMB 13809 / X14).